Consider the following 119-residue polypeptide: MRSKFKDEHPFEKRKAEAERIRQKYNDRIPVICEKVEKSDIATIDKKKYLVPADLTVGQFVYVIRKRIKLSPEKAIFIFVDEVLPPTAALMSSIYEEHKDEDGFLYITYSGENTFGEAL.

The Phosphatidylethanolamine amidated glycine moiety is linked to residue Gly116. Residues 117-119 (EAL) constitute a propeptide, removed in mature form.

This sequence belongs to the ATG8 family. Conjugation to phosphatidylethanolamine (PE) leads to homodimerization. Interacts with ATG1, ATG3, ATG4, ATG7 and ATG12. The C-terminal Glu-117, Ala-118 and Leu-119 residues of ATG8 are removed by ATG4 to expose Gly-116 at the C-terminus. This Gly-116 forms then a thioester bond with ATG7 (E1-like activating enzyme) before being transferred to ATG3 (the specific E2 conjugating enzyme), in order to be finally amidated with phosphatidylethanolamine. This lipid modification anchors ATG8 to membranes and can be reversed by ATG4, releasing soluble ATG8.

Its subcellular location is the cytoplasmic vesicle. It is found in the cvt vesicle membrane. It localises to the autophagosome membrane. The protein localises to the vacuole membrane. In terms of biological role, ubiquitin-like modifier involved in cytoplasm to vacuole transport (Cvt) vesicles and autophagosome formation. With ATG4, mediates the delivery of the vesicles and autophagosomes to the vacuole via the microtubule cytoskeleton. Required for selective autophagic degradation of the nucleus (nucleophagy) as well as for mitophagy which contributes to regulate mitochondrial quantity and quality by eliminating the mitochondria to a basal level to fulfill cellular energy requirements and preventing excess ROS production. Also participates in membrane fusion events that take place in the early secretory pathway. Also involved in endoplasmic reticulum-specific autophagic process and is essential for the survival of cells subjected to severe ER stress. The ATG8-PE conjugate mediates tethering between adjacent membranes and stimulates membrane hemifusion, leading to expansion of the autophagosomal membrane during autophagy. Moreover not only conjugation, but also subsequent ATG8-PE deconjugation is an important step required to facilitate multiple events during macroautophagy, and especially for efficient autophagosome biogenesis, the assembly of ATG9-containing tubulovesicular clusters into phagophores/autophagosomes, and for the disassembly of PAS-associated ATG components. Autophagy is required for conidiation, aerial mycelial growth, and pseudothecia formation, but not for host invasion. This Cochliobolus heterostrophus (strain C4 / ATCC 48331 / race T) (Southern corn leaf blight fungus) protein is Autophagy-related protein 8.